A 323-amino-acid polypeptide reads, in one-letter code: Sodium/potassium-transporting ATPase subunit beta-2 (323 aa).

The Cytoplasmic segment spans residues 1 to 50 (MPTITEDCIDGFQQYYSRPPERPKKKSLKQMVYDSEDNSYFGRSMDSWAK). The chain crosses the membrane as a helical; Signal-anchor for type II membrane protein span at residues 51-71 (IGIFYVAFYGVLAALVAICMW). Residues 72–323 (AFFQTLDPRI…GSVHYELLID (252 aa)) are Extracellular-facing. 2 disulfides stabilise this stretch: Cys-153-Cys-165 and Cys-175-Cys-189. N-linked (GlcNAc...) asparagine glycans are attached at residues Asn-180 and Asn-206. A disulfide bridge links Cys-241 with Cys-298.

This sequence belongs to the X(+)/potassium ATPases subunit beta family. In terms of assembly, the sodium/potassium-transporting ATPase is composed of a catalytic alpha subunit, an auxiliary non-catalytic beta subunit and an additional regulatory subunit. As to expression, in embryos, it is expressed in the neurons of the CNS and PNS, in Garland cells and posterior spiracles. In adults, it shows a nervous system specific distribution: optic lobes, brain, thoracic ganglia and axonal pathways in the leg. Both isoforms concentrate in the adult head, isoform 2.2 being predominant. Both isoforms are weakly expressed in the thorax and very poorly expressed in the abdomen.

The protein resides in the cell membrane. Functionally, this is the non-catalytic component of the active enzyme, which catalyzes the hydrolysis of ATP coupled with the exchange of Na(+) and K(+) ions across the plasma membrane. The beta subunit regulates, through assembly of alpha/beta heterodimers, the number of sodium pumps transported to the plasma membrane. This Drosophila melanogaster (Fruit fly) protein is Sodium/potassium-transporting ATPase subunit beta-2 (nrv2).